The following is a 156-amino-acid chain: Snaclec alboaggregin-B subunit alpha (156 aa).

Residues 1-23 (MGRFIFVSFGLLVVFLSLSGTGA) form the signal peptide. One can recognise a C-type lectin domain in the interval 24-151 (DCPSDWSSFK…CEQKHIFMCK (128 aa)). 3 disulfide bridges follow: cysteine 25/cysteine 36, cysteine 53/cysteine 150, and cysteine 125/cysteine 142.

The protein belongs to the snaclec family. Heterodimer of subunits alpha and beta; disulfide-linked. In terms of tissue distribution, expressed by the venom gland.

Its subcellular location is the secreted. Functionally, weakly agglutinates platelets at high doses by binding to GPIbalpha (GP1BA). The sequence is that of Snaclec alboaggregin-B subunit alpha from Trimeresurus albolabris (White-lipped pit viper).